Consider the following 422-residue polypeptide: Choline monooxygenase, chloroplastic (422 aa).

The N-terminal 47 residues, 1–47 (MMTTLTATVPEFLPPSLKSTRGYFNSHSEFGVSISKFSRRRFHNPTR), are a transit peptide targeting the chloroplast. In terms of domain architecture, Rieske spans 96-203 (WQAVGYSDQI…VAVWGPFVLL (108 aa)). 4 residues coordinate [2Fe-2S] cluster: cysteine 138, histidine 140, cysteine 157, and histidine 160. 2 residues coordinate Fe cation: histidine 269 and histidine 274.

This sequence belongs to the choline monooxygenase family. [2Fe-2S] cluster serves as cofactor. It depends on Fe cation as a cofactor. The cofactor is Mg(2+).

The protein localises to the plastid. It localises to the chloroplast stroma. The catalysed reaction is choline + 2 reduced [2Fe-2S]-[ferredoxin] + O2 + 2 H(+) = betaine aldehyde hydrate + 2 oxidized [2Fe-2S]-[ferredoxin] + H2O. Its pathway is amine and polyamine biosynthesis; betaine biosynthesis via choline pathway; betaine aldehyde from choline (monooxygenase route): step 1/1. Catalyzes the first step of the osmoprotectant glycine betaine synthesis. The polypeptide is Choline monooxygenase, chloroplastic (Arabidopsis thaliana (Mouse-ear cress)).